Here is a 984-residue protein sequence, read N- to C-terminus: Ubiquitin conjugation factor E4 ufd-2 (984 aa).

The U-box domain occupies 909-982 (DVPEEFKDPI…QEWICQKRNS (74 aa)).

Belongs to the ubiquitin conjugation factor E4 family. In terms of assembly, forms a complex composed of deubiquitinating enzyme atx-3, E4 ubiquitin-protein ligase ufd-2 and cdc-48.1; within the complex interacts with atx-3 and cdc-48.1 (via DDDLYN motif). Forms a complex composed of cdc-48.1, myosin chaperone unc-45, ubiquitin-protein ligases ufd-2 and chn-1; the complex targets myosin chaperone unc-45 for proteasomal degradation; within the complex interacts with cdc-48.1 (via DDDLYN motif), chn-1 and unc-45. Forms a complex composed of unc-45 and myosin heavy chain B unc-54; the complex targets unfolded unc-54 for proteasomal degradation; within the complex interacts with unc-45 (via TPR domain) and unc-54. Interacts with cdc-48.2 (via DDDLYN motif). As to expression, expressed in the germline (at protein level).

The protein localises to the cytoplasm. It is found in the nucleus membrane. Its subcellular location is the nucleus. It localises to the nucleolus. It carries out the reaction S-ubiquitinyl-[E2 ubiquitin-conjugating enzyme]-L-cysteine + [acceptor protein]-L-lysine = [E2 ubiquitin-conjugating enzyme]-L-cysteine + N(6)-ubiquitinyl-[acceptor protein]-L-lysine.. It participates in protein modification; protein ubiquitination. Its function is as follows. Acts as an E4 ubiquitin ligase mediating the assembly of polyubiquitin chains on substrates ubiquitinated by another E3 ubiquitin ligase. The elongation of preexisting ubiquitin chains preferentially targets ubiquitin 'Lys-29' and 'Lys-48' residues. Also functions as an E3 ligase in conjunction with specific E1 and E2 ligases. Probably by regulating protein ubiquitination at DNA damage repair sites, coordinates DNA double-strand-break repair and apoptosis in the germline. Required for germline apoptosis in response to DNA damage downstream of cep-1. Involved in the resolution of DNA-repair sites by promoting the release of rad-51 from DNA damage foci. In association with protein-ligase chn-1, acts as an E3/E4 ligase to poly-ubiquitinate lysine residues in the UCS domain of myosin chaperone unc-45. By targeting myosin chaperone unc-45 for proteasomal degradation, regulates myosin assembly in body wall muscles in association with cdc-48.1 and chn-1. However, in a contrasting study, acts as an E3 ligase, independently of chn-1, to poly-ubiquitinate unc-45 without promoting unc-45 proteasomal degradation. Instead, uses unc-45 as an adapter protein to recruit and poly-ubiquitinate unfolded myosin heavy chain B unc-54. This Caenorhabditis elegans protein is Ubiquitin conjugation factor E4 ufd-2.